We begin with the raw amino-acid sequence, 142 residues long: Hemoglobin subunit alpha-2 (142 aa).

Positions 2 to 142 (VLSPADKTNV…VSTVLTSKYR (141 aa)) constitute a Globin domain. An O2-binding site is contributed by His59. His88 contacts heme b.

Belongs to the globin family. In terms of assembly, heterotetramer of two alpha chains and two beta chains. As to expression, red blood cells.

In terms of biological role, involved in oxygen transport from the lung to the various peripheral tissues. The sequence is that of Hemoglobin subunit alpha-2 from Arctocephalus galapagoensis (Galapagoes fur seal).